The chain runs to 172 residues: C-phycocyanin beta subunit (172 aa).

An N4-methylasparagine modification is found at N72. C82 and C153 together coordinate (2R,3E)-phycocyanobilin.

Belongs to the phycobiliprotein family. The alpha and beta subunits exhibit high affinity for one another and form heterodimers. These heterodimers form heterohexamers of 3 alpha and 3 beta subunits which, in turn, aggregate into a heterododecamer consisting of 2 heterohexamers. Contains two covalently linked bilin chromophores.

The protein localises to the cellular thylakoid membrane. Functionally, light-harvesting photosynthetic bile pigment-protein from the phycobiliprotein complex (phycobilisome, PBS). Phycocyanin is the major phycobiliprotein in the PBS rod. This is C-phycocyanin beta subunit (cpcB) from Arthrospira platensis (Spirulina platensis).